Here is a 473-residue protein sequence, read N- to C-terminus: FAD-dependent oxidoreductase dpchF (473 aa).

The N-terminal stretch at 1 to 21 (MKLSFIASPVWALALAQFAAA) is a signal peptide. Residues Asn98, Asn128, Asn181, Asn262, and Asn330 are each glycosylated (N-linked (GlcNAc...) asparagine).

It belongs to the beta-cyclopiazonate dehydrogenase family. The cofactor is FAD.

The protein operates within secondary metabolite biosynthesis; terpenoid biosynthesis. Its function is as follows. FAD-dependent oxidoreductase; part of the gene cluster that mediates the biosynthesis of the diterpenoid pyrones higginsianins A and B. The first step of the pathway is the synthesis of the alpha-pyrone moiety by the polyketide synthase dpchA via condensation of one acetyl-CoA starter unit with 3 malonyl-CoA units and 2 methylations. The alpha-pyrone is then combined with geranylgeranyl pyrophosphate (GGPP) formed by the GGPP synthase dpchD through the action of the prenyltransferase dpchC to yield a linear alpha-pyrone diterpenoid. Subsequent steps in the diterpenoid pyrone biosynthetic pathway involve the decalin core formation, which is initiated by the epoxidation of the C10-C11 olefin by the FAD-dependent oxidoreductase dpchE, and is followed by a cyclization cascade catalyzed by the terpene cyclase dpchB. The short chain dehydrogenase/reductase dpchG then oxidizes the 8S hydroxy group to a ketone and the short chain dehydrogenase/reductase dpchH reduces the ketone to the 8R hydroxy group to yield higginsianin B. Finally, the FAD-dependent oxidoreductase dpchF converts higginsianin B into higginsianin A. The chain is FAD-dependent oxidoreductase dpchF from Colletotrichum higginsianum (strain IMI 349063) (Crucifer anthracnose fungus).